The primary structure comprises 445 residues: Squalene synthase (445 aa).

2 consecutive transmembrane segments (helical) span residues 291 to 311 (STFTFCAIPQVMAIATLDLVY) and 405 to 425 (LIVCLAVIFSMSGLMAYIAYV).

It belongs to the phytoene/squalene synthase family. Mg(2+) is required as a cofactor.

The protein resides in the endoplasmic reticulum membrane. The catalysed reaction is 2 (2E,6E)-farnesyl diphosphate + NADPH + H(+) = squalene + 2 diphosphate + NADP(+). It carries out the reaction 2 (2E,6E)-farnesyl diphosphate + NADH + H(+) = squalene + 2 diphosphate + NAD(+). It functions in the pathway terpene metabolism; lanosterol biosynthesis; lanosterol from farnesyl diphosphate: step 1/3. Its function is as follows. Catalyzes the condensation of 2 two farnesyl pyrophosphate moieties to form squalene. It is the first committed enzyme of the sterol biosynthesis pathway. Required for the biosynthesis of ergosterol. The protein is Squalene synthase (SQS1) of Yarrowia lipolytica (strain CLIB 122 / E 150) (Yeast).